The sequence spans 381 residues: Hydrogenase nickel incorporation protein HupN (381 aa).

Topologically, residues 1–39 (MLPFSMTGLEKDHTRGVLILANAHRRSERSRTASCAGPA) are cytoplasmic. The chain crosses the membrane as a helical span at residues 40–60 (VLFGGLITANIVAWAWAFALF). At 61 to 63 (ADR) the chain is on the periplasmic side. The helical transmembrane segment at 64–84 (PVVMATALLAWVFGLRHAVDA) threads the bilayer. Topologically, residues 85 to 110 (DHIAAIDNVVRSLMQTGGTPRSAGLY) are cytoplasmic. The helical transmembrane segment at 111-131 (FALGHSSVVVVATMLLALGVV) threads the bilayer. The Periplasmic segment spans residues 132 to 149 (SLGGDGLLKEIGSFIGAS). A helical transmembrane segment spans residues 150–170 (VSALFLLVIAAINLAIFASLW). Over 171–215 (RTFRKAREQGIRDAAGLDALLAHRGILVRLLGPMFRLVTKPWHMY) the chain is Cytoplasmic. Residues 216 to 236 (PLGFLFGLGFDTATEIGLLSI) traverse the membrane as a helical segment. The Periplasmic segment spans residues 237–243 (SASEAAR). The helical transmembrane segment at 244-264 (GASLADVMVFPALFAAGMALV) threads the bilayer. Residues 265-292 (DTADSTLMVSAYRWAFVDPMRKLWYNLT) lie on the Cytoplasmic side of the membrane. The helical transmembrane segment at 293–313 (ITGASVAVALFIGGIEALGLI) threads the bilayer. At 314 to 333 (GNRLDLSGGVWTLIDALNES) the chain is on the periplasmic side. The chain crosses the membrane as a helical span at residues 334–354 (LANVGLAVIALFAIAWLLSIV). Topologically, residues 355–381 (LYRRLIAGSSGLADTEVLECADATEAV) are cytoplasmic.

Belongs to the NiCoT transporter (TC 2.A.52) family.

The protein localises to the cell inner membrane. In terms of biological role, involved in nickel incorporation/metabolism into the hydrogenase apoprotein. In Bradyrhizobium diazoefficiens (strain JCM 10833 / BCRC 13528 / IAM 13628 / NBRC 14792 / USDA 110), this protein is Hydrogenase nickel incorporation protein HupN (hupN).